The sequence spans 323 residues: tRNA U34 carboxymethyltransferase (323 aa).

Carboxy-S-adenosyl-L-methionine is bound by residues K91, W105, K110, G130, 152–154, 181–182, M196, Y200, and R315; these read DPT and IE.

It belongs to the class I-like SAM-binding methyltransferase superfamily. CmoB family. In terms of assembly, homotetramer.

The enzyme catalyses carboxy-S-adenosyl-L-methionine + 5-hydroxyuridine(34) in tRNA = 5-carboxymethoxyuridine(34) in tRNA + S-adenosyl-L-homocysteine + H(+). Functionally, catalyzes carboxymethyl transfer from carboxy-S-adenosyl-L-methionine (Cx-SAM) to 5-hydroxyuridine (ho5U) to form 5-carboxymethoxyuridine (cmo5U) at position 34 in tRNAs. This chain is tRNA U34 carboxymethyltransferase, found in Escherichia coli (strain K12 / MC4100 / BW2952).